The chain runs to 621 residues: UvrABC system protein C (621 aa).

The GIY-YIG domain maps to Met20–Val98. Residues Asp207–Met242 form the UVR domain.

Belongs to the UvrC family. Interacts with UvrB in an incision complex.

The protein resides in the cytoplasm. Its function is as follows. The UvrABC repair system catalyzes the recognition and processing of DNA lesions. UvrC both incises the 5' and 3' sides of the lesion. The N-terminal half is responsible for the 3' incision and the C-terminal half is responsible for the 5' incision. This chain is UvrABC system protein C, found in Xylella fastidiosa (strain 9a5c).